The chain runs to 859 residues: MYSGAGPALAPPAPPPPIQGYAFKPPPRPDFGTSGRTIKLQANFFEMDIPKIDIYHYELDIKPEKCPRRVNREIVEHMVQHFKTQIFGDRKPVFDGRKNLYTAMPLPIGRDKVELEVTLPGEGKDRIFKVSIKWVSCVSLQALHDALSGRLPSVPFETIQALDVVMRHLPSMRYTPVGRSFFTASEGCSNPLGGGREVWFGFHQSVRPSLWKMMLNIDVSATAFYKAQPVIEFVCEVLDFKSIEEQQKPLTDSQRVKFTKEIKGLKVEITHCGQMKRKYRVCNVTRRPASHQTFPLQQESGQTVECTVAQYFKDRHKLVLRYPHLPCLQVGQEQKHTYLPLEVCNIVAGQRCIKKLTDNQTSTMIRATARSAPDRQEEISKLMRSASFNTDPYVREFGIMVKDEMTDVTGRVLQPPSILYGGRNKAIATPVQGVWDMRNKQFHTGIEIKVWAIACFAPQRQCTEVHLKSFTEQLRKISRDAGMPIQGQPCFCKYAQGADSVEPMFRHLKNTYAGLQLVVVILPGKTPVYAEVKRVGDTVLGMATQCVQMKNVQRTTPQTLSNLCLKINVKLGGVNNILLPQGRPPVFQQPVIFLGADVTHPPAGDGKKPSIAAVVGSMDAHPNRYCATVRVQQHRQEIIQDLAAMVRELLIQFYKSTRFKPTRIIFYRDGVSEGQFQQVLHHELLAIREACIKLEKDYQPGITFIVVQKRHHTRLFCTDKNERVGKSGNIPAGTTVDTKITHPTEFDFYLCSHAGIQGTSRPSHYHVLWDDNRFSSDELQILTYQLCHTYVRCTRSVSIPAPAYYAHLVAFRARYHLVDKEHDSAEGSHTSGQSNGRDHQALAKAVQVHQDTLRTMYFA.

The disordered stretch occupies residues Met-1 to Pro-27. The residue at position 2 (Tyr-2) is a 3'-nitrotyrosine. Over residues Leu-9–Pro-27 the composition is skewed to pro residues. The PAZ domain maps to Pro-229–Ala-348. The tract at residues Tyr-311–His-316 is interaction with guide RNA. Residue Ser-387 is modified to Phosphoserine. The region spanning Leu-517–Val-818 is the Piwi domain. Residues Gly-524–Lys-566 form an interaction with guide RNA region. The tract at residues Phe-587–Pro-590 is interaction with GW182 family members. Asp-597 contributes to the a divalent metal cation binding site. The segment at Leu-650–Lys-660 is interaction with GW182 family members. Asp-669 contacts a divalent metal cation. A 4-hydroxyproline modification is found at Pro-700. 3 interaction with guide RNA regions span residues Lys-709 to Arg-710, His-753 to Arg-761, and Tyr-790 to Arg-812. A divalent metal cation is bound at residue His-807. A phosphoserine mark is found at Ser-824, Ser-828, Ser-831, and Ser-834.

It belongs to the argonaute family. Ago subfamily. Interacts with DICER1 through its Piwi domain and with TARBP2 during assembly of the RNA-induced silencing complex (RISC). Together, DICER1, AGO2 and TARBP2 constitute the trimeric RISC loading complex (RLC), or micro-RNA (miRNA) loading complex (miRLC). Within the RLC/miRLC, DICER1 and TARBP2 are required to process precursor miRNAs (pre-miRNAs) to mature miRNAs and then load them onto AGO2. AGO2 bound to the mature miRNA constitutes the minimal RISC and may subsequently dissociate from DICER1 and TARBP2. Note however that the term RISC has also been used to describe the trimeric RLC/miRLC. The formation of RISC complexes containing siRNAs rather than miRNAs appears to occur independently of DICER1. Interacts with AGO1. Also interacts with DDB1, DDX5, DDX6, DDX20, DHX30, DHX36, DDX47, DHX9, ELAVL, FXR1, GEMIN4, HNRNPF, IGF2BP1, ILF3, IMP8, MATR3, PABPC1, PRMT5, P4HA1, P4HB, RBM4, SART3, TNRC6A, TNRC6B, UPF1 and YBX1. Interacts with the P-body components DCP1A and XRN1. Associates with polysomes and messenger ribonucleoproteins (mNRPs). Interacts with RBM4; the interaction is modulated under stress-induced conditions, occurs under both cell proliferation and differentiation conditions and in an RNA- and phosphorylation-independent manner. Interacts with LIMD1, WTIP and AJUBA. Interacts with TRIM71; the interaction increases in presence of RNA. Interacts with APOBEC3G in an RNA-dependent manner. Interacts with APOBEC3A, APOBEC3C, APOBEC3F and APOBEC3H. Interacts with DICER1, TARBP2, EIF6, MOV10 and RPL7A (60S ribosome subunit); they form a large RNA-induced silencing complex (RISC). Interacts with FMR1. Interacts with ZFP36. Found in a complex, composed of AGO2, CHD7 and ARB2A. Interacts with RC3H1; the interaction is RNA independent. Interacts with SND1. Interacts with SYT11. Interacts with CLNK. Interacts with GARRE1. Interacts with GRB2; this interaction is important for the formation of a ternary complex containing GRB2, AGO2 and DICER1. As to quaternary structure, (Microbial infection) Interacts with Epstein-Barr virus (EBV) tegument protein BGLF2; this interaction participates in the regulation of cellular miRNA by the virus, leading to enhanced SUMOylation. In terms of assembly, (Microbial infection) Interacts with rotavirus A non-structural protein 5; this interaction probably plays a role in the sequestration of AGO2 in viral factories. (Microbial infection) Interacts with human herpesvirus 8 protein MTA/ORF57; this interaction inhibits P-body formation. Mg(2+) is required as a cofactor. Mn(2+) serves as cofactor. In terms of processing, hydroxylated. 4-hydroxylation appears to enhance protein stability but is not required for miRNA-binding or endonuclease activity. Post-translationally, ubiquitinated on surface-exposed lysines by a SCF-like E3 ubiquitin-protein ligase complex containing ZSWIM8 during target-directed microRNA degradation (TDMD), a process that mediates degradation of microRNAs (miRNAs). Ubiquitination by the SCF-like E3 ubiquitin-protein ligase complex containing ZSWIM8 leads to its subsequent degradation, thereby exposing miRNAs for degradation. ZSWIM8 recognizes and binds AGO2 when it is engaged with a TDMD target. Phosphorylated. A phosphorylation cycle of C-terminal serine cluster (Ser-824-Ser-834) regulates the release of target mRNAs. Target-binding leads to phosphorylation of these residues by CSNK1A1, which reduces the affinity of AGO2 for mRNA and enables target release. The ANKRD52-PPP6C phosphatase complex dephosphorylates the residues, which primes AGO2 for binding a new target. In terms of processing, phosphorylation at Ser-387 by AKT3; leads to up-regulate translational repression of microRNA target and down-regulate endonucleolytic cleavage.

The protein localises to the cytoplasm. Its subcellular location is the P-body. It localises to the nucleus. The enzyme catalyses Endonucleolytic cleavage to 5'-phosphomonoester.. With respect to regulation, inhibited by EDTA. Its function is as follows. Required for RNA-mediated gene silencing (RNAi) by the RNA-induced silencing complex (RISC). The 'minimal RISC' appears to include AGO2 bound to a short guide RNA such as a microRNA (miRNA) or short interfering RNA (siRNA). These guide RNAs direct RISC to complementary mRNAs that are targets for RISC-mediated gene silencing. The precise mechanism of gene silencing depends on the degree of complementarity between the miRNA or siRNA and its target. Binding of RISC to a perfectly complementary mRNA generally results in silencing due to endonucleolytic cleavage of the mRNA specifically by AGO2. Binding of RISC to a partially complementary mRNA results in silencing through inhibition of translation, and this is independent of endonuclease activity. May inhibit translation initiation by binding to the 7-methylguanosine cap, thereby preventing the recruitment of the translation initiation factor eIF4-E. May also inhibit translation initiation via interaction with EIF6, which itself binds to the 60S ribosomal subunit and prevents its association with the 40S ribosomal subunit. The inhibition of translational initiation leads to the accumulation of the affected mRNA in cytoplasmic processing bodies (P-bodies), where mRNA degradation may subsequently occur. In some cases RISC-mediated translational repression is also observed for miRNAs that perfectly match the 3' untranslated region (3'-UTR). Can also up-regulate the translation of specific mRNAs under certain growth conditions. Binds to the AU element of the 3'-UTR of the TNF (TNF-alpha) mRNA and up-regulates translation under conditions of serum starvation. Also required for transcriptional gene silencing (TGS), in which short RNAs known as antigene RNAs or agRNAs direct the transcriptional repression of complementary promoter regions. In terms of biological role, (Microbial infection) Upon Sars-CoV-2 infection, associates with viral miRNA-like small RNA, CoV2-miR-O7a, and may repress mRNAs, such as BATF2, to evade the IFN response. The sequence is that of Protein argonaute-2 from Homo sapiens (Human).